A 796-amino-acid polypeptide reads, in one-letter code: Probable phosphoketolase (796 aa).

It belongs to the XFP family. Thiamine diphosphate is required as a cofactor.

This Synechococcus elongatus (strain ATCC 33912 / PCC 7942 / FACHB-805) (Anacystis nidulans R2) protein is Probable phosphoketolase.